The following is a 200-amino-acid chain: Superoxide dismutase [Mn] (200 aa).

The Mn(2+) site is built by His27, His77, Asp160, and His164.

The protein belongs to the iron/manganese superoxide dismutase family. As to quaternary structure, homodimer. It depends on Mn(2+) as a cofactor.

The enzyme catalyses 2 superoxide + 2 H(+) = H2O2 + O2. In terms of biological role, destroys superoxide anion radicals which are normally produced within the cells and which are toxic to biological systems. This Rhizobium meliloti (strain 1021) (Ensifer meliloti) protein is Superoxide dismutase [Mn] (sodB).